Reading from the N-terminus, the 689-residue chain is tRNA 5-methylaminomethyl-2-thiouridine biosynthesis bifunctional protein MnmC (689 aa).

The tract at residues 1–245 (MNQRPIQTAT…KREMLTGTLP (245 aa)) is tRNA (mnm(5)s(2)U34)-methyltransferase. The FAD-dependent cmnm(5)s(2)U34 oxidoreductase stretch occupies residues 270-689 (IGGGIVSALT…RSPATQESSR (420 aa)).

The protein in the N-terminal section; belongs to the methyltransferase superfamily. tRNA (mnm(5)s(2)U34)-methyltransferase family. In the C-terminal section; belongs to the DAO family. Requires FAD as cofactor.

Its subcellular location is the cytoplasm. It catalyses the reaction 5-aminomethyl-2-thiouridine(34) in tRNA + S-adenosyl-L-methionine = 5-methylaminomethyl-2-thiouridine(34) in tRNA + S-adenosyl-L-homocysteine + H(+). Its function is as follows. Catalyzes the last two steps in the biosynthesis of 5-methylaminomethyl-2-thiouridine (mnm(5)s(2)U) at the wobble position (U34) in tRNA. Catalyzes the FAD-dependent demodification of cmnm(5)s(2)U34 to nm(5)s(2)U34, followed by the transfer of a methyl group from S-adenosyl-L-methionine to nm(5)s(2)U34, to form mnm(5)s(2)U34. The protein is tRNA 5-methylaminomethyl-2-thiouridine biosynthesis bifunctional protein MnmC of Yersinia pestis.